The following is a 372-amino-acid chain: NAD(P)H-quinone oxidoreductase subunit 1 (372 aa).

8 helical membrane passes run 27-47, 97-117, 128-148, 176-196, 204-224, 266-286, 308-328, and 347-367; these read IIWL…GVLV, ILFT…WLIV, VGIG…GLLM, LALS…IDIV, ILSW…ICAL, ILSA…PIPV, SIGI…AILL, and FLLP…LAFP.

Belongs to the complex I subunit 1 family. In terms of assembly, NDH-1 is composed of at least 11 different subunits.

Its subcellular location is the cellular thylakoid membrane. It carries out the reaction a plastoquinone + NADH + (n+1) H(+)(in) = a plastoquinol + NAD(+) + n H(+)(out). The catalysed reaction is a plastoquinone + NADPH + (n+1) H(+)(in) = a plastoquinol + NADP(+) + n H(+)(out). In terms of biological role, NDH-1 shuttles electrons from an unknown electron donor, via FMN and iron-sulfur (Fe-S) centers, to quinones in the respiratory and/or the photosynthetic chain. The immediate electron acceptor for the enzyme in this species is believed to be plastoquinone. Couples the redox reaction to proton translocation, and thus conserves the redox energy in a proton gradient. In Prochlorococcus marinus subsp. pastoris (strain CCMP1986 / NIES-2087 / MED4), this protein is NAD(P)H-quinone oxidoreductase subunit 1.